A 1364-amino-acid polypeptide reads, in one-letter code: Toxin subunit YenA2 (1364 aa).

Residues 1025–1080 adopt a coiled-coil conformation; sequence SESYRRRRQEWELQYKQAEWEVNSVEQQINLQNMQIKAANKRLEQVEAQQQQAMAL.

Semipurified toxin complex consists of at least YenA1-YenA2-YenB-YenC1-YenC2-Chi1-Chi2. The Yen-TC:K9 subcomplex is about 26 nm tall and 22 nm in diameter with 5-fold symmetry and 5 copies of YenA1, YenA2, Chi1 and Chi2; the chitinase subunits may be solvent accessible on the exterior the complex. The Yen-TC:K9 subcomplex has no insecticidal activity. The native complex with additional YenB, YenC1 and YenC2 subunits is 16 nm taller and is insecticidal; the toxicity-conferring subunits are present at about 1 copy each. In terms of processing, the isolated toxin complex includes 3 peptides starting between residues 768 and 778 of this protein, which might be physiologically relevant.

It localises to the secreted. In terms of biological role, part of an orally active toxin complex (TC) with strong insecticidal effects on larvae of the Coleoptera Costelytra zealandica, Acrossidius tasmania and Adoryphorus couloni and some Lepidoptera larvae. The TC has an endochitinase activity. The polypeptide is Toxin subunit YenA2 (Yersinia entomophaga).